Reading from the N-terminus, the 67-residue chain is uncharacterized protein (67 aa).

Residues 12–34 (YYYAHQTVCITSTGFALCFVVQA) traverse the membrane as a helical segment.

Its subcellular location is the membrane. This is an uncharacterized protein from Saccharomyces cerevisiae (strain ATCC 204508 / S288c) (Baker's yeast).